Consider the following 167-residue polypeptide: Piercer of microtubule wall 1 protein (167 aa).

A disordered region spans residues 1–54 (MSEEKPQQSAEEPEPGEPKAKPAPEEPEPGEPKAKPAPEEPEPGEPKAKPAPEK). The span at 16 to 54 (GEPKAKPAPEEPEPGEPKAKPAPEEPEPGEPKAKPAPEK) shows a compositional bias: basic and acidic residues.

It belongs to the PIERCE1 family. Microtubule inner protein component of sperm flagellar doublet microtubules. Interacts with CFAP53, ODAD1 and ODAD3; the interactions link the outer dynein arms docking complex (ODA-DC) to the internal microtubule inner proteins (MIP) in cilium axoneme. As to expression, expressed in brain, lung, kidney and testis.

The protein resides in the cytoplasm. Its subcellular location is the cytoskeleton. It localises to the cilium axoneme. It is found in the flagellum axoneme. Microtubule inner protein involved in the attachment of outer dynein arms (ODAs) to dynein-decorated doublet microtubules (DMTs) in cilia axoneme. Functions at the initial step of left-right asymmetry specification of the visceral organs. This chain is Piercer of microtubule wall 1 protein, found in Mus musculus (Mouse).